A 342-amino-acid polypeptide reads, in one-letter code: DNA-directed RNA polymerase subunit alpha (342 aa).

Positions 1–239 (MTTFLAKNWS…DQLQVFINFQ (239 aa)) are alpha N-terminal domain (alpha-NTD). Residues 254–342 (INPVLLKKVY…SLAKKHEDQY (89 aa)) form an alpha C-terminal domain (alpha-CTD) region.

The protein belongs to the RNA polymerase alpha chain family. In terms of assembly, homodimer. The RNAP catalytic core consists of 2 alpha, 1 beta, 1 beta' and 1 omega subunit. When a sigma factor is associated with the core the holoenzyme is formed, which can initiate transcription.

The catalysed reaction is RNA(n) + a ribonucleoside 5'-triphosphate = RNA(n+1) + diphosphate. Functionally, DNA-dependent RNA polymerase catalyzes the transcription of DNA into RNA using the four ribonucleoside triphosphates as substrates. This chain is DNA-directed RNA polymerase subunit alpha, found in Orientia tsutsugamushi (strain Boryong) (Rickettsia tsutsugamushi).